Reading from the N-terminus, the 420-residue chain is Homeobox-containing protein 1 (420 aa).

In terms of domain architecture, HNF-p1 spans 18–49 (DEPRFTIEQIDLLQRLRRTGMTKHEILHALET). Residues 56 to 139 (EHSDKFGRRS…GKMSPTRYHA (84 aa)) form a disordered region. Lysine 60 participates in a covalent cross-link: Glycyl lysine isopeptide (Lys-Gly) (interchain with G-Cter in SUMO2). Low complexity-rich tracts occupy residues 64–73 (RSSYGGSSYG) and 81–93 (ASSSTATASTQTQ). The span at 94-132 (HSGMSPSPSNSYDTSPQPCTTNQNGRENNERLSTSNGKM) shows a compositional bias: polar residues. Residue lysine 131 forms a Glycyl lysine isopeptide (Lys-Gly) (interchain with G-Cter in SUMO2) linkage. The 97-residue stretch at 145-241 (RSYSFEASEE…PGATLSMRPA (97 aa)) folds into the POU-specific atypical domain. Serine 148 bears the Phosphoserine mark. Residue lysine 161 forms a Glycyl lysine isopeptide (Lys-Gly) (interchain with G-Cter in SUMO2) linkage. Serine 170 is subject to Phosphoserine. Glycyl lysine isopeptide (Lys-Gly) (interchain with G-Cter in SUMO2) cross-links involve residues lysine 174, lysine 217, and lysine 310. The segment at residues 267 to 341 (RRGSRFTWRK…NRRKEIKRRA (75 aa)) is a DNA-binding region (homeobox). A disordered region spans residues 353 to 385 (IDVQSPGGHSNSDDVDGNDYSEQDDSTSHSDHQ). Positions 365 to 377 (DDVDGNDYSEQDD) are enriched in acidic residues. Residue lysine 413 forms a Glycyl lysine isopeptide (Lys-Gly) (interchain with G-Cter in SUMO1); alternate linkage. Lysine 413 is covalently cross-linked (Glycyl lysine isopeptide (Lys-Gly) (interchain with G-Cter in SUMO2); alternate).

In terms of assembly, associates with the telomerase holoenzyme complex. Interacts with DKC1, XRCC6 and COIL. Ubiquitous. Detected in pancreas, brain, spleen, placenta, prostate, thymus, liver, heart, bone marrow, skeletal muscle, stomach, uterus, testis, kidney, ovary, colon, lung, cardiac muscle and thyroid gland.

The protein localises to the nucleus. Its subcellular location is the cytoplasm. It is found in the chromosome. It localises to the telomere. The protein resides in the cajal body. The protein localises to the PML body. Its function is as follows. Binds directly to 5'-TTAGGG-3' repeats in telomeric DNA. Associates with the telomerase complex at sites of active telomere processing and positively regulates telomere elongation. Important for TERT binding to chromatin, indicating a role in recruitment of the telomerase complex to telomeres. Also plays a role in the alternative lengthening of telomeres (ALT) pathway in telomerase-negative cells where it promotes formation and/or maintenance of ALT-associated promyelocytic leukemia bodies (APBs). Enhances formation of telomere C-circles in ALT cells, suggesting a possible role in telomere recombination. Might also be involved in the DNA damage response at telomeres. In Homo sapiens (Human), this protein is Homeobox-containing protein 1.